We begin with the raw amino-acid sequence, 362 residues long: G-prodeshotein coupled receptor 4 (362 aa).

Residues 1 to 8 are Extracellular-facing; the sequence is MGNHTWEG. N-linked (GlcNAc...) asparagine glycosylation occurs at Asn-3. The helical transmembrane segment at 9 to 45 threads the bilayer; it reads CHVDSRVDHLFPPSLYIFVIGVGLPTNCLALWAAYRQ. 2 cysteine pairs are disulfide-bonded: Cys-9-Cys-258 and Cys-90-Cys-168. The Cytoplasmic portion of the chain corresponds to 46 to 49; sequence VQQR. Residues 50–80 traverse the membrane as a helical segment; sequence NELGVYLMNLSIADLLYICTLPLWVDYFLHH. Topologically, residues 81–85 are extracellular; the sequence is DNWIH. A helical membrane pass occupies residues 86-121; it reads GPGSCKLFGFIFYTNIYISIAFLCCISVDRYLAVAH. Over 122–129 the chain is Cytoplasmic; it reads PLRFARLR. Residues 130–156 form a helical membrane-spanning segment; sequence RVKTAVAVSSVVWATELGANSAPLFHD. Residues 157 to 172 lie on the Extracellular side of the membrane; that stretch reads ELFRDRYNHTFCFEKF. An extracellular loop 2 (ECL2) region spans residues 157-172; that stretch reads ELFRDRYNHTFCFEKF. Asn-164 is a glycosylation site (N-linked (GlcNAc...) asparagine). A helical membrane pass occupies residues 173 to 210; the sequence is PMEGWVAWMNLYRVFVGFLFPWALMLLSYRGILRAVRG. Residues 211–214 are Cytoplasmic-facing; the sequence is SVST. The chain crosses the membrane as a helical span at residues 215–250; that stretch reads ERQEKAKIKRLALSLIAIVLVCFAPYHVLLLSRSAI. Topologically, residues 251-260 are extracellular; that stretch reads YLGRPWDCGF. Residues 261 to 289 form a helical membrane-spanning segment; it reads EERVFSAYHSSLAFTSLNCVADPILYCLV. At 290 to 362 the chain is on the cytoplasmic side; sequence NEGARSDVAK…VQLKMLPPAQ (73 aa). The interval 335 to 362 is disordered; sequence AKAMTGSWAATPPSQGDQVQLKMLPPAQ.

The protein belongs to the G-protein coupled receptor 1 family.

Its subcellular location is the cell membrane. Activated by a network of residues that connects an extracellular-facing cavity to Glu-145, a conserved charged residue buried in the transmembrane core of the receptor. Protonation likely drives conformational changes in extracellular loop 2 (ECL2), which stabilizes movement of transmembrane 3 (TM3) and a series of rearrangements that connect the extracellular-facing cavity to Glu-145, a residue only conserved in proton-sensing G-protein coupled receptors. Functionally, proton-sensing G-protein coupled receptor activated by extracellular pH, which is required to monitor pH changes and generate adaptive reactions. Activated by an optimal pH of 6.8-7.2. Ligand binding causes a conformation change that triggers signaling via guanine nucleotide-binding proteins (G proteins) and modulates the activity of downstream effectors, such as adenylate cyclase. GPR4 is mainly coupled to G(s) G proteins and mediates activation of adenylate cyclase activity. May also couple with G(q) and G(12)/G(13) G proteins. Acts as a key regulator of respiratory sensitivity to CO2/H(+) in brain retrotrapezoid nucleus neurons: acts by mediating detection of protons generated by the formation of carbonic acid in the blood, an important mechanism to impulse to breathe. Also acts as a regulator of acid secretion in the kidney collecting duct by maintaining acid-base homeostasis in the kidney. Acidosis-induced GPR4 activation increases paracellular gap formation and permeability of vascular endothelial cells, possibly through the G(12)/G(13)/Rho GTPase signaling pathway. This chain is G-prodeshotein coupled receptor 4, found in Homo sapiens (Human).